The chain runs to 453 residues: Lipase 9 (453 aa).

The N-terminal stretch at 1–14 is a signal peptide; that stretch reads MLYLILFLIAPIYA. The N-linked (GlcNAc...) asparagine glycan is linked to Asn36. Cys110 and Cys281 are oxidised to a cystine. Ser194 acts as the Charge relay system in catalysis. 3 N-linked (GlcNAc...) asparagine glycosylation sites follow: Asn229, Asn266, and Asn269. Residues Asp343 and His376 each act as charge relay system in the active site. Cysteines 359 and 404 form a disulfide. N-linked (GlcNAc...) asparagine glycosylation is present at Asn417.

It belongs to the AB hydrolase superfamily. Lipase family. Class Lip subfamily.

The protein resides in the secreted. The enzyme catalyses a triacylglycerol + H2O = a diacylglycerol + a fatty acid + H(+). Secreted lipase that is able to hydrolyze both the neutral triacylglycerols and the monopalmitate ester Tween 40, allowing the use of hydrolyzed products as carbon sources. Has broad lipolytic activity, which may be important for colonization and subsequent infection, therefore contributing to the persistence and virulence in human tissue. The sequence is that of Lipase 9 from Candida albicans (strain SC5314 / ATCC MYA-2876) (Yeast).